The sequence spans 281 residues: Nucleotide-binding protein CTN_0898 (281 aa).

9–16 serves as a coordination point for ATP; the sequence is GLSGAGKT. 58 to 61 provides a ligand contact to GTP; it reads DVRS.

This sequence belongs to the RapZ-like family.

Its function is as follows. Displays ATPase and GTPase activities. This chain is Nucleotide-binding protein CTN_0898, found in Thermotoga neapolitana (strain ATCC 49049 / DSM 4359 / NBRC 107923 / NS-E).